Reading from the N-terminus, the 535-residue chain is Light-independent protochlorophyllide reductase subunit B (535 aa).

Aspartate 36 contacts [4Fe-4S] cluster. Aspartate 292 (proton donor) is an active-site residue. Position 428–429 (428–429 (GL)) interacts with substrate.

Belongs to the ChlB/BchB/BchZ family. Protochlorophyllide reductase is composed of three subunits; BchL, BchN and BchB. Forms a heterotetramer of two BchB and two BchN subunits. Requires [4Fe-4S] cluster as cofactor.

It catalyses the reaction chlorophyllide a + oxidized 2[4Fe-4S]-[ferredoxin] + 2 ADP + 2 phosphate = protochlorophyllide a + reduced 2[4Fe-4S]-[ferredoxin] + 2 ATP + 2 H2O. The protein operates within porphyrin-containing compound metabolism; bacteriochlorophyll biosynthesis (light-independent). Functionally, component of the dark-operative protochlorophyllide reductase (DPOR) that uses Mg-ATP and reduced ferredoxin to reduce ring D of protochlorophyllide (Pchlide) to form chlorophyllide a (Chlide). This reaction is light-independent. The NB-protein (BchN-BchB) is the catalytic component of the complex. This chain is Light-independent protochlorophyllide reductase subunit B, found in Pelodictyon phaeoclathratiforme (strain DSM 5477 / BU-1).